The chain runs to 438 residues: 3-phosphoshikimate 1-carboxyvinyltransferase (438 aa).

Residues Lys20, Ser21, and Arg25 each coordinate 3-phosphoshikimate. Phosphoenolpyruvate is bound at residue Lys20. The phosphoenolpyruvate site is built by Gly90 and Arg118. 3-phosphoshikimate-binding residues include Ser163, Ser164, Gln165, Ser191, Asp320, and Lys347. Phosphoenolpyruvate is bound at residue Gln165. Asp320 (proton acceptor) is an active-site residue. Positions 351 and 392 each coordinate phosphoenolpyruvate.

It belongs to the EPSP synthase family. In terms of assembly, monomer.

The protein resides in the cytoplasm. It catalyses the reaction 3-phosphoshikimate + phosphoenolpyruvate = 5-O-(1-carboxyvinyl)-3-phosphoshikimate + phosphate. It participates in metabolic intermediate biosynthesis; chorismate biosynthesis. Functionally, catalyzes the transfer of the enolpyruvyl moiety of phosphoenolpyruvate (PEP) to the 5-hydroxyl of shikimate-3-phosphate (S3P) to produce enolpyruvyl shikimate-3-phosphate and inorganic phosphate. In Natronomonas pharaonis (strain ATCC 35678 / DSM 2160 / CIP 103997 / JCM 8858 / NBRC 14720 / NCIMB 2260 / Gabara) (Halobacterium pharaonis), this protein is 3-phosphoshikimate 1-carboxyvinyltransferase.